The following is a 1194-amino-acid chain: UPF0507 protein PICST_55861 (1194 aa).

The VPS9 domain maps to glutamine 324 to serine 475.

This sequence belongs to the UPF0507 family.

The sequence is that of UPF0507 protein PICST_55861 from Scheffersomyces stipitis (strain ATCC 58785 / CBS 6054 / NBRC 10063 / NRRL Y-11545) (Yeast).